Consider the following 312-residue polypeptide: Bifunctional pinoresinol-lariciresinol reductase 1 (312 aa).

Residues 10-16 (GGTGYIG), Arg35, and Lys44 contribute to the NADP(+) site. Lys136 functions as the Proton acceptor in the catalytic mechanism. Arg140 is an NADP(+) binding site. His268 serves as a coordination point for substrate.

It belongs to the NmrA-type oxidoreductase family. Isoflavone reductase subfamily. In terms of assembly, dimer. As to expression, expressed in seeds and roots, but not in stems. Detected in leaves.

It carries out the reaction (-)-lariciresinol + NADP(+) = (-)-pinoresinol + NADPH + H(+). The catalysed reaction is (+)-secoisolariciresinol + NADP(+) = (-)-lariciresinol + NADPH + H(+). In terms of biological role, reductase involved in lignan biosynthesis. Catalyzes the enantioselective conversion of (-)-pinoresinol into (-)-lariciresinol and of (-)-lariciresinol into (+)-secoisolariciresinol. Abstracts the 4R-hydride from the NADPH cofactor during catalysis. The protein is Bifunctional pinoresinol-lariciresinol reductase 1 (PLR_Lu1) of Linum usitatissimum (Flax).